A 163-amino-acid polypeptide reads, in one-letter code: Nucleotide-binding protein BPUM_1028 (163 aa).

This sequence belongs to the YajQ family.

Nucleotide-binding protein. This chain is Nucleotide-binding protein BPUM_1028, found in Bacillus pumilus (strain SAFR-032).